The following is a 290-amino-acid chain: Fructose-bisphosphate aldolase (290 aa).

Ser51 contributes to the D-glyceraldehyde 3-phosphate binding site. The Proton donor role is filled by Asp86. Zn(2+)-binding residues include His87, Asp107, Glu137, and His179. Residue Gly180 coordinates dihydroxyacetone phosphate. Position 208 (His208) interacts with Zn(2+). Dihydroxyacetone phosphate-binding positions include 209–211 (GGS) and 230–233 (NINT).

Belongs to the class II fructose-bisphosphate aldolase family. Homodimer. It depends on Zn(2+) as a cofactor.

It carries out the reaction beta-D-fructose 1,6-bisphosphate = D-glyceraldehyde 3-phosphate + dihydroxyacetone phosphate. It participates in carbohydrate degradation; glycolysis; D-glyceraldehyde 3-phosphate and glycerone phosphate from D-glucose: step 4/4. Functionally, catalyzes the aldol condensation of dihydroxyacetone phosphate (DHAP or glycerone-phosphate) with glyceraldehyde 3-phosphate (G3P) to form fructose 1,6-bisphosphate (FBP) in gluconeogenesis and the reverse reaction in glycolysis. This is Fructose-bisphosphate aldolase (fba) from Ureaplasma parvum serovar 3 (strain ATCC 700970).